A 172-amino-acid chain; its full sequence is Putative acetyltransferase YvoF (172 aa).

The protein belongs to the transferase hexapeptide repeat family.

The sequence is that of Putative acetyltransferase YvoF (yvoF) from Bacillus subtilis (strain 168).